Consider the following 426-residue polypeptide: MSKSENLYSAARELIPGGVNSPVRAFTGVGGTPLFIEKADGAYLYDVDGKAYIDYVGSWGPMVLGHNHPAIRNAVIEAAERGLSFGAPTEMEVKMAELVTNLVPTMDMVRMVNSGTEATMSAIRLARGFTGRDKIIKFEGCYHGHADCLLVKAGSGALTLGQPNSPGVPADFAKHTLTCTYNDLTSVHAAFEQYPQEIACIIVEPVAGNMNCVPPLPEFLPGLRALCDEFGALLIIDEVMTGFRVALAGAQDYYGVVPDLTCLGKIIGGGMPVGAFGGRRDVMDALAPTGPVYQAGTLSGNPIAMAAGFACLNEVAQPGIHETLDELTTRLAEGLLEAAEDANIPLVVNHVGGMFGIFFTDAESVTCYQDVMACDVERFKRFFHLMLEEGVYLAPSAFEAGFMSVAHSEEDINNTIDAARRVFAKL.

K265 bears the N6-(pyridoxal phosphate)lysine mark.

This sequence belongs to the class-III pyridoxal-phosphate-dependent aminotransferase family. HemL subfamily. Homodimer. Pyridoxal 5'-phosphate serves as cofactor.

It localises to the cytoplasm. It carries out the reaction (S)-4-amino-5-oxopentanoate = 5-aminolevulinate. The protein operates within porphyrin-containing compound metabolism; protoporphyrin-IX biosynthesis; 5-aminolevulinate from L-glutamyl-tRNA(Glu): step 2/2. The sequence is that of Glutamate-1-semialdehyde 2,1-aminomutase from Salmonella gallinarum (strain 287/91 / NCTC 13346).